Consider the following 324-residue polypeptide: Succinylglutamate desuccinylase (324 aa).

H53, E56, and H148 together coordinate Zn(2+). E211 is a catalytic residue.

It belongs to the AspA/AstE family. Succinylglutamate desuccinylase subfamily. Requires Zn(2+) as cofactor.

It catalyses the reaction N-succinyl-L-glutamate + H2O = L-glutamate + succinate. Its pathway is amino-acid degradation; L-arginine degradation via AST pathway; L-glutamate and succinate from L-arginine: step 5/5. Transforms N(2)-succinylglutamate into succinate and glutamate. This is Succinylglutamate desuccinylase from Acinetobacter baumannii (strain SDF).